We begin with the raw amino-acid sequence, 290 residues long: Cbb3-type cytochrome c oxidase subunit CcoP (290 aa).

Positions 1–22 (MSVKPTKQKPGEPPTTGHSWDG) are disordered. Over 1–37 (MSVKPTKQKPGEPPTTGHSWDGIEEFDNPMPRWWLWT) the chain is Cytoplasmic. The helical transmembrane segment at 38-58 (FYVTIVWAIGYSILYPAWPLI) threads the bilayer. The Periplasmic portion of the chain corresponds to 59 to 290 (NGATNGLIGH…VYVHGLGGGE (232 aa)). Cytochrome c domains follow at residues 109–199 (YATN…LQIS) and 206–287 (ALSA…HGLG). Residues Cys-122, Cys-125, His-126, Met-174, Cys-219, Cys-222, His-223, and Met-264 each coordinate heme c.

It belongs to the CcoP / FixP family. In terms of assembly, component of the cbb3-type cytochrome c oxidase at least composed of CcoN, CcoO, CcoQ and CcoP. It depends on heme c as a cofactor.

Its subcellular location is the cell inner membrane. Its pathway is energy metabolism; oxidative phosphorylation. Its function is as follows. C-type cytochrome. Part of the cbb3-type cytochrome c oxidase complex. CcoP subunit is required for transferring electrons from donor cytochrome c via its heme groups to CcoO subunit. From there, electrons are shuttled to the catalytic binuclear center of CcoN subunit where oxygen reduction takes place. The complex also functions as a proton pump. The protein is Cbb3-type cytochrome c oxidase subunit CcoP of Cereibacter sphaeroides (strain ATCC 17023 / DSM 158 / JCM 6121 / CCUG 31486 / LMG 2827 / NBRC 12203 / NCIMB 8253 / ATH 2.4.1.) (Rhodobacter sphaeroides).